The chain runs to 258 residues: Thiamine thiazole synthase (258 aa).

NAD(+) contacts are provided by residues S36, 55–56 (ER), G63, V127, and 153–155 (HVD). 2 residues coordinate Fe cation: D155 and H170. M224 is an NAD(+) binding site. Residue R234 coordinates glycine.

This sequence belongs to the THI4 family. Homooctamer; tetramer of dimers. The cofactor is Fe(2+).

It carries out the reaction hydrogen sulfide + glycine + NAD(+) = ADP-5-ethyl-4-methylthiazole-2-carboxylate + nicotinamide + 3 H2O + H(+). It participates in cofactor biosynthesis; thiamine diphosphate biosynthesis. In terms of biological role, involved in the biosynthesis of the thiazole moiety of thiamine. Catalyzes the conversion of NAD and glycine to adenosine diphosphate 5-(2-hydroxyethyl)-4-methylthiazole-2-carboxylate (ADT), an adenylated thiazole intermediate, using free sulfide as a source of sulfur. This is Thiamine thiazole synthase from Desulfosudis oleivorans (strain DSM 6200 / JCM 39069 / Hxd3) (Desulfococcus oleovorans).